We begin with the raw amino-acid sequence, 156 residues long: 6,7-dimethyl-8-ribityllumazine synthase (156 aa).

Residues phenylalanine 22, 57–59 (AYE), and 81–83 (TVI) each bind 5-amino-6-(D-ribitylamino)uracil. Position 86–87 (86–87 (GT)) interacts with (2S)-2-hydroxy-3-oxobutyl phosphate. The Proton donor role is filled by histidine 89. A 5-amino-6-(D-ribitylamino)uracil-binding site is contributed by phenylalanine 114. Arginine 128 is a binding site for (2S)-2-hydroxy-3-oxobutyl phosphate.

This sequence belongs to the DMRL synthase family. In terms of assembly, forms an icosahedral capsid composed of 60 subunits, arranged as a dodecamer of pentamers.

The enzyme catalyses (2S)-2-hydroxy-3-oxobutyl phosphate + 5-amino-6-(D-ribitylamino)uracil = 6,7-dimethyl-8-(1-D-ribityl)lumazine + phosphate + 2 H2O + H(+). It participates in cofactor biosynthesis; riboflavin biosynthesis; riboflavin from 2-hydroxy-3-oxobutyl phosphate and 5-amino-6-(D-ribitylamino)uracil: step 1/2. Its function is as follows. Catalyzes the formation of 6,7-dimethyl-8-ribityllumazine by condensation of 5-amino-6-(D-ribitylamino)uracil with 3,4-dihydroxy-2-butanone 4-phosphate. This is the penultimate step in the biosynthesis of riboflavin. The sequence is that of 6,7-dimethyl-8-ribityllumazine synthase from Erwinia tasmaniensis (strain DSM 17950 / CFBP 7177 / CIP 109463 / NCPPB 4357 / Et1/99).